Here is an 832-residue protein sequence, read N- to C-terminus: Disintegrin and metalloproteinase domain-containing protein 23 (832 aa).

Positions 1–10 (MKPPGSSSRQ) are enriched in polar residues. The interval 1–37 (MKPPGSSSRQPPLAGCSLAGASCGPQRGPAGSVPASA) is disordered. The first 59 residues, 1–59 (MKPPGSSSRQPPLAGCSLAGASCGPQRGPAGSVPASAPARTPPCRLLLVLLLLPPLAAS), serve as a signal peptide directing secretion. Over residues 28–37 (GPAGSVPASA) the composition is skewed to low complexity. Positions 60–286 (SRPRAWGAAA…ELQWLKRRKR (227 aa)) are excised as a propeptide. Asn-76, Asn-96, Asn-100, and Asn-263 each carry an N-linked (GlcNAc...) asparagine glycan. Residues 287-792 (AVNPSRGIFE…EGPKGPSATN (506 aa)) are Extracellular-facing. The 198-residue stretch at 299 to 496 (KYLELMIVND…GGGACLFNRP (198 aa)) folds into the Peptidase M12B domain. Disulfide bonds link Cys-408–Cys-491, Cys-450–Cys-475, and Cys-452–Cys-459. A Disintegrin domain is found at 502–588 (PTECGNGYVE…QCPPNLHKQD (87 aa)). N-linked (GlcNAc...) asparagine glycans are attached at residues Asn-547 and Asn-548. A disulfide bridge connects residues Cys-560 and Cys-580. The may bind the integrin receptor stretch occupies residues 563–568 (AVNECD). 2 N-linked (GlcNAc...) asparagine glycosylation sites follow: Asn-664 and Asn-732. Residues 732 to 769 (NMSSCPLDSKGKVCSGHGVCSNEATCICDFTWAGTDCS) enclose the EGF-like domain. Intrachain disulfides connect Cys-736–Cys-751, Cys-745–Cys-757, and Cys-759–Cys-768. A helical transmembrane segment spans residues 793–813 (LIIGSIAGAILVAAIVLGGTG). Over 814–832 (WGFKNVKKRRFDPTQQGPI) the chain is Cytoplasmic.

In terms of assembly, can bind to LGI1 and LGI4. Ligand for integrin alpha-V/beta-3. In terms of tissue distribution, highly expressed in the brain and weakly expressed in the heart. In the brain, expressed prominently in the amygdala, caudate nucleus, hypothalamus, thalamus, cerebral cortex and occipital pole.

It is found in the cell membrane. It localises to the secreted. Functionally, may play a role in cell-cell and cell-matrix interactions. This is a non-catalytic metalloprotease-like protein. The protein is Disintegrin and metalloproteinase domain-containing protein 23 (ADAM23) of Homo sapiens (Human).